The sequence spans 392 residues: Phospho-N-acetylmuramoyl-pentapeptide-transferase (392 aa).

Transmembrane regions (helical) follow at residues 29 to 49, 76 to 96, 100 to 120, 137 to 157, 192 to 212, 225 to 245, 262 to 282, 289 to 309, 314 to 334, and 369 to 389; these read AVLA…WVIG, TMGG…WFDL, FVWI…VDDW, YLWQ…CISE, AVSY…VIVG, GLAI…AYVT, SGEL…FLWF, VFMG…IAII, IVLA…MLQV, and QVVV…LSTL.

Belongs to the glycosyltransferase 4 family. MraY subfamily. Mg(2+) is required as a cofactor.

It is found in the cell inner membrane. It carries out the reaction UDP-N-acetyl-alpha-D-muramoyl-L-alanyl-gamma-D-glutamyl-meso-2,6-diaminopimeloyl-D-alanyl-D-alanine + di-trans,octa-cis-undecaprenyl phosphate = di-trans,octa-cis-undecaprenyl diphospho-N-acetyl-alpha-D-muramoyl-L-alanyl-D-glutamyl-meso-2,6-diaminopimeloyl-D-alanyl-D-alanine + UMP. Its pathway is cell wall biogenesis; peptidoglycan biosynthesis. Functionally, catalyzes the initial step of the lipid cycle reactions in the biosynthesis of the cell wall peptidoglycan: transfers peptidoglycan precursor phospho-MurNAc-pentapeptide from UDP-MurNAc-pentapeptide onto the lipid carrier undecaprenyl phosphate, yielding undecaprenyl-pyrophosphoryl-MurNAc-pentapeptide, known as lipid I. The protein is Phospho-N-acetylmuramoyl-pentapeptide-transferase of Verminephrobacter eiseniae (strain EF01-2).